Consider the following 172-residue polypeptide: Secretory-abundant heat soluble protein 64681 (172 aa).

A signal peptide spans 1 to 19; the sequence is MSRTIVALILLGLAALAAA. The segment at 30–59 is SAHS-c1; sequence EWAGKAWLGKWVSTDRSENWDAFVEALGLP. Positions 74-102 are SAHS-c2; the sequence is WKEGDHYHHQIIIADKSYKQDIQFKLGEE. Asn-108 and Asn-133 each carry an N-linked (GlcNAc...) asparagine glycan. An SAHS-c3 region spans residues 115–164; it reads KYTEVGDNLQNEVKIPSKNKTISDSYVVKGDELEKTYKINDVVAKRWYKK.

Belongs to the Secretory-abundant heat soluble protein (SAHS) family.

Its subcellular location is the secreted. Its function is as follows. Secreted heat soluble protein acting as a molecular shield in water-deficient condition. Tardigrade-specific intrinsically disordered proteins (TDPs) are essential for desiccation tolerance by forming non-crystalline amorphous solids upon desiccation, and this vitrified state mirrors their protective capabilities. The polypeptide is Secretory-abundant heat soluble protein 64681 (Hypsibius exemplaris (Freshwater tardigrade)).